The following is a 207-amino-acid chain: Outer-membrane lipoprotein LolB (207 aa).

The N-terminal stretch at Met1–Ala21 is a signal peptide. Cys22 is lipidated: N-palmitoyl cysteine. Cys22 carries the S-diacylglycerol cysteine lipid modification.

This sequence belongs to the LolB family. As to quaternary structure, monomer.

It is found in the cell outer membrane. Its function is as follows. Plays a critical role in the incorporation of lipoproteins in the outer membrane after they are released by the LolA protein. The chain is Outer-membrane lipoprotein LolB from Escherichia coli O7:K1 (strain IAI39 / ExPEC).